We begin with the raw amino-acid sequence, 892 residues long: Zinc finger protein 473 homolog (892 aa).

The region spanning 23 to 101 is the KRAB domain; that stretch reads ETLKDLAMDF…TKSSPLQSGF (79 aa). 2 stretches are compositionally biased toward polar residues: residues 66–76 and 84–97; these read DTSQPSLTSQP and ATST…SSPL. Disordered stretches follow at residues 66-97 and 134-203; these read DTSQ…SSPL and GDPE…DSVQ. Basic and acidic residues-rich tracts occupy residues 138–156 and 190–203; these read SLPR…HQSP and KESR…DSVQ. C2H2-type zinc fingers lie at residues 209-231 and 265-287; these read YKCS…WVLH and YTCQ…QKIH. The segment covering 297-308 has biased composition (polar residues); it reads SDSNLEGLSRSP. The tract at residues 297–370 is disordered; the sequence is SDSNLEGLSR…HPKPLRHQKT (74 aa). Basic and acidic residues-rich tracts occupy residues 313 to 323 and 332 to 353; these read GKQRLSKDTDS and QDQE…ESQP. C2H2-type zinc fingers lie at residues 377–399, 404–426, 432–454, 460–482, 488–510, 516–538, 544–566, and 572–594; these read FRCK…QRAH, YKCA…RKSH, CECQ…QAIH, YKCD…QRIH, HKCS…QRVH, HQCP…RLRH, FGCA…NKIH, and YECK…LSIH. Residue lysine 476 forms a Glycyl lysine isopeptide (Lys-Gly) (interchain with G-Cter in SUMO2) linkage. A Glycyl lysine isopeptide (Lys-Gly) (interchain with G-Cter in SUMO2) cross-link involves residue lysine 602. The C2H2-type 11; degenerate zinc-finger motif lies at 697 to 719; the sequence is FKCDIYNRAFKQRAHLSKHQLIH. C2H2-type zinc fingers lie at residues 725-747, 753-775, 781-803, 809-831, 837-859, and 865-887; these read FKCN…QKTH, FECS…QKIH, FKCG…QRIH, YVCQ…LRIH, YTCG…ERIH, and YACG…QRIH.

Belongs to the krueppel C2H2-type zinc-finger protein family. Interacts with the SLBP/pre-mRNA complex but not with SLBP alone. Interacts with LSM11 in a U7 snRNP-dependent manner.

It is found in the nucleus. Involved in histone 3'-end pre-mRNA processing by associating with U7 snRNP and interacting with SLBP/pre-mRNA complex. Increases histone 3'-end pre-mRNA processing but has no effect on U7 snRNP levels, when overexpressed. Required for cell cycle progression from G1 to S phases. The sequence is that of Zinc finger protein 473 homolog (Znf473) from Mus musculus (Mouse).